A 153-amino-acid chain; its full sequence is Aspartate carbamoyltransferase regulatory chain (153 aa).

Zn(2+) is bound by residues cysteine 109, cysteine 114, cysteine 138, and cysteine 141.

This sequence belongs to the PyrI family. As to quaternary structure, contains catalytic and regulatory chains. Zn(2+) is required as a cofactor.

Its function is as follows. Involved in allosteric regulation of aspartate carbamoyltransferase. This Cronobacter sakazakii (strain ATCC BAA-894) (Enterobacter sakazakii) protein is Aspartate carbamoyltransferase regulatory chain.